Here is a 383-residue protein sequence, read N- to C-terminus: Cytochrome b (383 aa).

4 consecutive transmembrane segments (helical) span residues 30-50 (FGSL…LLAM), 74-96 (WILR…CHIG), 109-129 (TWIV…IGYV), and 175-195 (FFSL…AHLL). Heme b contacts are provided by histidine 80 and histidine 94. Histidine 179 and histidine 193 together coordinate heme b. Histidine 198 is an a ubiquinone binding site. 4 consecutive transmembrane segments (helical) span residues 221 to 241 (FTIK…IIGI), 289 to 309 (GVLA…LDRS), 320 to 340 (AKFF…IGSA), and 345 to 365 (EPYV…FLVL).

Belongs to the cytochrome b family. The main subunits of complex b-c1 are: cytochrome b, cytochrome c1 and the Rieske protein. Heme b is required as a cofactor.

The protein localises to the mitochondrion inner membrane. Its function is as follows. Component of the ubiquinol-cytochrome c reductase complex (complex III or cytochrome b-c1 complex) that is part of the mitochondrial respiratory chain. The b-c1 complex mediates electron transfer from ubiquinol to cytochrome c. Contributes to the generation of a proton gradient across the mitochondrial membrane that is then used for ATP synthesis. The polypeptide is Cytochrome b (mt:Cyt-b) (Trichoplax adhaerens (Trichoplax reptans)).